The primary structure comprises 65 residues: Alpha-toxin BeM10 (65 aa).

The LCN-type CS-alpha/beta domain maps to 2-65 (RDGYIADDKD…IKQKVSGKCN (64 aa)). Intrachain disulfides connect Cys12–Cys64, Cys16–Cys35, Cys22–Cys45, and Cys26–Cys47.

It belongs to the long (4 C-C) scorpion toxin superfamily. Sodium channel inhibitor family. Alpha subfamily. Expressed by the venom gland.

The protein localises to the secreted. Alpha toxins bind voltage-independently at site-3 of sodium channels (Nav) and inhibit the inactivation of the activated channels, thereby blocking neuronal transmission. Has paralytic activity in mice. This chain is Alpha-toxin BeM10, found in Mesobuthus eupeus (Lesser Asian scorpion).